The primary structure comprises 582 residues: MLHIPSSSERPASQPEPERAPPGEPSHESALAGIYEISKILNAPGRLEVTLANVLGLLQSFVQMRHGLVSLFNDDGVPELTVGAGWSEGTDERYRTCVPQKAIHEIVATGRSLMVENVAAETAFSAADREVLGASDSIPVAFIGVPIRVDSTVVGTLTIDRIPEGSSSLLEYDARLLAMVANVIGQTIKLHRLFAGDREQSLVDKDRLEKQTVDRGPPARERKQLQAHGIIGDSPALSALLEKIVVVARSNSTVLLRGESGTGKELVAKAIHESSVRAKRPFVKLNCAALPETVLESELFGHEKGAFTGAVSARKGRFELADKGTLFLDEIGEISPPFQAKLLRVLQEQEFERVGSNHTIKVDVRVIAATNRNLEEAVARSEFRADLYYRISVVPLLLPPLRERRSDIPLLAREFLRKFNSENGRSLTLEASAIDVLMSCKFPGNVRELENCIERTATLSAGTSIVRSDFACSQGQCLSTTLWKSTSYGKTDPAAPMQPVPAKSIIPLAETAPPPQAVCEPGSLAPSGTVLVSGARMADRERVVAAMEKSGWVQAKAARLLGLTPRQVGYALRKYGIEIKRF.

Polar residues predominate over residues methionine 1–proline 11. The interval methionine 1–glutamate 28 is disordered. A compositionally biased stretch (basic and acidic residues) spans glutamate 16 to histidine 27. Residues arginine 46–isoleucine 188 enclose the GAF domain. The Sigma-54 factor interaction domain occupies isoleucine 230–threonine 458. ATP is bound by residues glycine 258 to glutamate 265 and alanine 321 to glutamate 330. Residues leucine 459 to aspartate 539 form an inter-domain linker region. Cysteine 472 and cysteine 477 together coordinate a divalent metal cation. A C-terminal DNA-binding domain region spans residues arginine 540–phenylalanine 582. Residues glutamine 554–arginine 573 constitute a DNA-binding region (H-T-H motif).

In terms of assembly, interacts with sigma-54.

Its function is as follows. Required for activation of most nif operons, which are directly involved in nitrogen fixation. The chain is Nif-specific regulatory protein (nifA) from Bradyrhizobium diazoefficiens (strain JCM 10833 / BCRC 13528 / IAM 13628 / NBRC 14792 / USDA 110).